Here is a 453-residue protein sequence, read N- to C-terminus: Probable exopolygalacturonase B (453 aa).

An N-terminal signal peptide occupies residues 1-16 (MKFLALAALFASTVSS). N-linked (GlcNAc...) asparagine glycans are attached at residues Asn-185 and Asn-225. Catalysis depends on Asp-255, which acts as the Proton donor. Residues Cys-257 and Cys-274 are joined by a disulfide bond. N-linked (GlcNAc...) asparagine glycosylation is found at Asn-263 and Asn-275. His-278 is a catalytic residue. PbH1 repeat units follow at residues 295 to 316 (IENV…RLKA) and 327 to 348 (INNV…VLDQ). Asn-302, Asn-329, Asn-354, and Asn-366 each carry an N-linked (GlcNAc...) asparagine glycan. A PbH1 3 repeat occupies 362–405 (PSRVNFTNIVFENIYGTSSGKHGKVVADLTCSPNAVCSGIRLKN). Cysteines 392 and 398 form a disulfide. The N-linked (GlcNAc...) asparagine glycan is linked to Asn-436.

Belongs to the glycosyl hydrolase 28 family.

It is found in the secreted. The catalysed reaction is [(1-&gt;4)-alpha-D-galacturonosyl](n) + H2O = alpha-D-galacturonate + [(1-&gt;4)-alpha-D-galacturonosyl](n-1). In terms of biological role, specific in hydrolyzing the terminal glycosidic bond of polygalacturonic acid and oligogalacturonates. This Neosartorya fischeri (strain ATCC 1020 / DSM 3700 / CBS 544.65 / FGSC A1164 / JCM 1740 / NRRL 181 / WB 181) (Aspergillus fischerianus) protein is Probable exopolygalacturonase B (pgxB).